Consider the following 127-residue polypeptide: Secreted RxLR effector protein 7 (127 aa).

Positions 1 to 21 (MRSAYYVLTALLVVASSQVAA) are cleaved as a signal peptide. The RxLR-dEER motif lies at 48 to 65 (RFLRESRDVHGNVANEER).

It belongs to the RxLR effector family.

The protein resides in the secreted. The protein localises to the host nucleus. It localises to the host cytoplasm. Secreted effector that completely suppresses the host cell death induced by cell death-inducing proteins. The sequence is that of Secreted RxLR effector protein 7 from Plasmopara viticola (Downy mildew of grapevine).